We begin with the raw amino-acid sequence, 289 residues long: Methionyl-tRNA formyltransferase (289 aa).

106–109 is a binding site for (6S)-5,6,7,8-tetrahydrofolate; that stretch reads SLLP.

It belongs to the Fmt family.

The enzyme catalyses L-methionyl-tRNA(fMet) + (6R)-10-formyltetrahydrofolate = N-formyl-L-methionyl-tRNA(fMet) + (6S)-5,6,7,8-tetrahydrofolate + H(+). Attaches a formyl group to the free amino group of methionyl-tRNA(fMet). The formyl group appears to play a dual role in the initiator identity of N-formylmethionyl-tRNA by promoting its recognition by IF2 and preventing the misappropriation of this tRNA by the elongation apparatus. This Mycoplasmopsis pulmonis (strain UAB CTIP) (Mycoplasma pulmonis) protein is Methionyl-tRNA formyltransferase.